The following is a 205-amino-acid chain: Putative glutamine amidotransferase-like protein L716 (205 aa).

The Glutamine amidotransferase type-1 domain maps to Met1–Ala176. Residues Cys82, His155, and Asp157 each act as for GATase activity in the active site.

In Acanthamoeba polyphaga mimivirus (APMV), this protein is Putative glutamine amidotransferase-like protein L716.